A 191-amino-acid polypeptide reads, in one-letter code: ADP-ribosylation factor (191 aa).

Gly2 carries the N-myristoyl glycine lipid modification. Residues 24-31 (GLDAAGKT), 67-71 (DVGGQ), and 128-131 (NKQD) each bind GTP.

The protein belongs to the small GTPase superfamily. Arf family.

It is found in the golgi apparatus. In terms of biological role, GTP-binding protein involved in protein trafficking; may modulate vesicle budding and uncoating within the Golgi apparatus. The sequence is that of ADP-ribosylation factor from Giardia intestinalis (Giardia lamblia).